The chain runs to 170 residues: RxLR effector protein PITG_07555 (170 aa).

The N-terminal stretch at 1–17 (MQAYHLLLVCMYISCSA) is a signal peptide. A RxLR-dEER motif is present at residues 50-62 (RALRTHNPDREER).

This sequence belongs to the RxLR effector family.

Its subcellular location is the secreted. The protein localises to the host cytoplasm. It is found in the host nucleus. Its function is as follows. Effector that enhances P.infestans colonization of Nicotiana benthamiana leaves. The protein is RxLR effector protein PITG_07555 of Phytophthora infestans (strain T30-4) (Potato late blight agent).